The following is a 388-amino-acid chain: Succinate--CoA ligase [ADP-forming] subunit beta (388 aa).

Positions 9 to 244 constitute an ATP-grasp domain; sequence KQLFARYGLP…PSQEDSREAH (236 aa). Residues K46, 53–55, E99, T102, and E107 contribute to the ATP site; that span reads GRG. 2 residues coordinate Mg(2+): N199 and D213. Substrate is bound by residues N264 and 321–323; that span reads GIV.

The protein belongs to the succinate/malate CoA ligase beta subunit family. As to quaternary structure, heterotetramer of two alpha and two beta subunits. The cofactor is Mg(2+).

It carries out the reaction succinate + ATP + CoA = succinyl-CoA + ADP + phosphate. It catalyses the reaction GTP + succinate + CoA = succinyl-CoA + GDP + phosphate. It participates in carbohydrate metabolism; tricarboxylic acid cycle; succinate from succinyl-CoA (ligase route): step 1/1. Its function is as follows. Succinyl-CoA synthetase functions in the citric acid cycle (TCA), coupling the hydrolysis of succinyl-CoA to the synthesis of either ATP or GTP and thus represents the only step of substrate-level phosphorylation in the TCA. The beta subunit provides nucleotide specificity of the enzyme and binds the substrate succinate, while the binding sites for coenzyme A and phosphate are found in the alpha subunit. The sequence is that of Succinate--CoA ligase [ADP-forming] subunit beta from Pectobacterium atrosepticum (strain SCRI 1043 / ATCC BAA-672) (Erwinia carotovora subsp. atroseptica).